The chain runs to 2080 residues: Dysferlin (2080 aa).

The 101-residue stretch at 1-101 (MLRVFILYAE…LATPSLSASF (101 aa)) folds into the C2 1 domain. At 1–2046 (MLRVFILYAE…FILWRRFRWA (2046 aa)) the chain is on the cytoplasmic side. Ca(2+) is bound by residues Asp18, Ile19, Asp21, and Asn40. The segment covering 132–144 (LFPPPTPLEPSPT) has biased composition (pro residues). A disordered region spans residues 132 to 215 (LFPPPTPLEP…APTSRKLLSD (84 aa)). Residues 155–172 (GGEEDTEDQGLTGDEAEP) are compositionally biased toward acidic residues. At Thr166 the chain carries Phosphothreonine. A phosphoserine mark is found at Thr166 and Gly167. Residues Tyr197 and Pro198 each carry the phosphothreonine modification. C2 domains are found at residues 203–321 (KRSA…RKWL), 360–496 (DKED…EEEP), 1136–1262 (GVNR…PLTR), 1310–1438 (PPPQ…AESP), 1561–1679 (PMPP…ARCG), and 1795–1943 (GRPG…KKCS). 4 residues coordinate Ca(2+): Asp1168, Asp1174, Asp1230, and Asp1232. Positions 1594, 1600, 1649, 1651, 1914, 1917, and 1920 each coordinate Ca(2+). The segment at 1995-2017 (SEHEERPAGQGRDEPNMNPKLED) is disordered. Residues 2047 to 2067 (IILFIILFILLLFLAIFIYAF) form a helical membrane-spanning segment. Over 2068–2080 (PNYAAMKLVKPFS) the chain is Extracellular.

It belongs to the ferlin family. In terms of assembly, interacts with CACNA1S. Interacts with ANXA1; the interaction is Ca(2+)- and injury state-dependent. Interacts with ANXA2; the interaction is Ca(2+)- and injury state-dependent. Interacts with CACNA1S and PARVB. Interacts with TRIM72/MG53; interaction is required for transport to sites of cell injury during repair patch formation. Interacts with RIPOR2; this interaction occurs during early myogenic differentiation. Interacts with CAV3 and PARVB. Interacts with AHNAK; the interaction is direct and Ca(2+)-independent. Interacts with AHNAK2; the interaction is direct and Ca(2+)-independent. It depends on Ca(2+) as a cofactor. In terms of tissue distribution, expressed in skeletal muscle, myoblast, myotube and in the syncytiotrophoblast (STB) of the placenta (at protein level). Ubiquitous. Highly expressed in skeletal muscle. Also found in heart, brain, spleen, intestine, placenta and at lower levels in liver, lung, kidney and pancreas.

The protein localises to the cell membrane. It is found in the sarcolemma. The protein resides in the cytoplasmic vesicle membrane. In terms of biological role, key calcium ion sensor involved in the Ca(2+)-triggered synaptic vesicle-plasma membrane fusion. Plays a role in the sarcolemma repair mechanism of both skeletal muscle and cardiomyocytes that permits rapid resealing of membranes disrupted by mechanical stress. The protein is Dysferlin (DYSF) of Homo sapiens (Human).